The chain runs to 154 residues: 6,7-dimethyl-8-ribityllumazine synthase (154 aa).

5-amino-6-(D-ribitylamino)uracil contacts are provided by residues F22, A56 to E58, and A80 to I82. Residue S85–T86 participates in (2S)-2-hydroxy-3-oxobutyl phosphate binding. The active-site Proton donor is H88. 5-amino-6-(D-ribitylamino)uracil is bound at residue F113. (2S)-2-hydroxy-3-oxobutyl phosphate is bound at residue R127.

It belongs to the DMRL synthase family.

It catalyses the reaction (2S)-2-hydroxy-3-oxobutyl phosphate + 5-amino-6-(D-ribitylamino)uracil = 6,7-dimethyl-8-(1-D-ribityl)lumazine + phosphate + 2 H2O + H(+). The protein operates within cofactor biosynthesis; riboflavin biosynthesis; riboflavin from 2-hydroxy-3-oxobutyl phosphate and 5-amino-6-(D-ribitylamino)uracil: step 1/2. Functionally, catalyzes the formation of 6,7-dimethyl-8-ribityllumazine by condensation of 5-amino-6-(D-ribitylamino)uracil with 3,4-dihydroxy-2-butanone 4-phosphate. This is the penultimate step in the biosynthesis of riboflavin. The sequence is that of 6,7-dimethyl-8-ribityllumazine synthase from Clostridium beijerinckii (strain ATCC 51743 / NCIMB 8052) (Clostridium acetobutylicum).